Consider the following 145-residue polypeptide: Basic phospholipase A2 textilotoxin A chain (145 aa).

The N-terminal stretch at 1-19 (MHPAHLLVLLGVCVSLLGA) is a signal peptide. A propeptide spanning residues 20–27 (SDIPPLPL) is cleaved from the precursor. Cystine bridges form between Cys38–Cys98, Cys54–Cys144, Cys56–Cys72, Cys71–Cys125, Cys78–Cys118, Cys87–Cys111, and Cys105–Cys116. 3 residues coordinate Ca(2+): Tyr55, Gly57, and Gly59. His75 is an active-site residue. Asp76 lines the Ca(2+) pocket. Asp119 is a catalytic residue.

Belongs to the phospholipase A2 family. Group I subfamily. D49 sub-subfamily. Heterohexamer. 2 forms exist: 2 A or 2 B chains, 2 C chains and 2 covalently-linked D chains, and 1 A or 1 B, 1 C, 2 covalently-linked D chains and 2 differentially glycosylated covalently-linked D chains. Textilotoxin was originally described as pentameric. The cofactor is Ca(2+). Expressed by the venom gland.

The protein localises to the secreted. The enzyme catalyses a 1,2-diacyl-sn-glycero-3-phosphocholine + H2O = a 1-acyl-sn-glycero-3-phosphocholine + a fatty acid + H(+). In terms of biological role, snake venom oligomeric phospholipase A2 that has potent presynaptic neurotoxicity. Chain A possesses a very low toxicity, but is essential for neurotoxicity. Possesses a low enzymatic activity. PLA2 catalyzes the calcium-dependent hydrolysis of the 2-acyl groups in 3-sn-phosphoglycerides. This Pseudonaja textilis (Eastern brown snake) protein is Basic phospholipase A2 textilotoxin A chain.